The chain runs to 813 residues: Valine--tRNA ligase (813 aa).

The 'HIGH' region motif lies at 46-56; it reads PTVSGQLHIGH. The 'KMSKS' region motif lies at 536 to 540; that stretch reads KMSKS. K539 serves as a coordination point for ATP.

It belongs to the class-I aminoacyl-tRNA synthetase family. ValS type 2 subfamily. Monomer.

Its subcellular location is the cytoplasm. The catalysed reaction is tRNA(Val) + L-valine + ATP = L-valyl-tRNA(Val) + AMP + diphosphate. Its function is as follows. Catalyzes the attachment of valine to tRNA(Val). As ValRS can inadvertently accommodate and process structurally similar amino acids such as threonine, to avoid such errors, it has a 'posttransfer' editing activity that hydrolyzes mischarged Thr-tRNA(Val) in a tRNA-dependent manner. This Rickettsia canadensis (strain McKiel) protein is Valine--tRNA ligase.